The primary structure comprises 501 residues: L-arabinose isomerase (501 aa).

Residues Glu307, Glu334, His351, and His450 each contribute to the Mn(2+) site.

It belongs to the arabinose isomerase family. The cofactor is Mn(2+).

It catalyses the reaction beta-L-arabinopyranose = L-ribulose. It participates in carbohydrate degradation; L-arabinose degradation via L-ribulose; D-xylulose 5-phosphate from L-arabinose (bacterial route): step 1/3. Functionally, catalyzes the conversion of L-arabinose to L-ribulose. The chain is L-arabinose isomerase from Acidothermus cellulolyticus (strain ATCC 43068 / DSM 8971 / 11B).